A 482-amino-acid chain; its full sequence is Spore germination protein A1 (482 aa).

6 helical membrane passes run 242–262 (VAIL…LGIL), 284–304 (FASI…VSFH), 321–341 (ENVP…IELL), 351–371 (PLGQ…AVEA), 373–393 (LVSS…FTVP), and 406–426 (FISM…FMLV).

The protein belongs to the GerABKA family.

The protein localises to the cell membrane. Its function is as follows. Forms a complex at the inner spore membrane which acts as a receptor for L-alanine, thus is involved in the stimulation of germination in response to alanine. Can stimulate germination in the absence of GerD and GerK gene products (fructose and glucose receptors, respectively), but the response is improved in their presence. This is Spore germination protein A1 (gerAA) from Bacillus subtilis (strain 168).